The sequence spans 414 residues: MSAIGDKNQFRIIVGSYEHNILCLSLDIPNQKENDAAKTPHFMPIFHFQAHSLSIKCLAVSRRYLVSGSNDEHIRIYDLQKRKELGTLLSHQGSITALQFSHPASSSEDAAVSKGSKNSKWLLSASEDHKIMVWRVKDWETVGTLKGHTARVNDVDIHPTNRIAISVSDDHSIRLWNLMTLRNAAVLKLRKYNTNGTCVRWLGAKGDYFAVGLRDRVLIYETGSAKVFKEIVFQRKTLMHIETHILPFDNKEYLSVGISDGNVHFYPCEELFEKVEENEKQEDDDDKEDISPAFSLLGHTNRIKDFKFYTNEFGTYLVTIGSDGKIVVWDMSTKEQVAVYDCGERLNCLTLCDESIEKYNTMKKRDAETADIGDQSEVESDTEELKKIMFGEKKKLNKKKRKQLKKSKVSVELE.

The residue at position 2 (Ser-2) is an N-acetylserine. WD repeat units follow at residues 50–78 (AHSLSIKCLAVSRRYLVSGSNDEHIRIYD), 90–135 (SHQG…MVWR), 147–177 (GHTARVNDVDIHPTNRIAISVSDDHSIRLWN), 189–221 (LRKYNTNGTCVRWLGAKGDYFAVGLRDRVLIYE), 238–267 (LMHIETHILPFDNKEYLSVGISDGNVHFYP), and 298–330 (GHTNRIKDFKFYTNEFGTYLVTIGSDGKIVVWD). Residues Ser-376 and Ser-380 each carry the phosphoserine modification. Thr-382 is modified (phosphothreonine).

In terms of assembly, associates with 60S pre-ribosomal particles.

It is found in the nucleus. The protein localises to the nucleolus. It localises to the nucleus membrane. In terms of biological role, essential for cell growth. Plays a role in assembly of 60S pre-ribosomal particles in the nucleolus. Also required for replication of the M1 double-stranded RNA of the L-A virus. This latter function may reflect an enhanced requirement for free 60S ribosomal particles for the translation of viral mRNAs which lack poly-A tails. This chain is Protein MAK11 (MAK11), found in Saccharomyces cerevisiae (strain ATCC 204508 / S288c) (Baker's yeast).